Here is a 115-residue protein sequence, read N- to C-terminus: Probable mycobacterial cidal antitoxin Rv3188 (115 aa).

This sequence belongs to the MbcA/ParS/Xre antitoxin family. Forms a heterotetramer with cognate toxin Rv3189.

Functionally, probable antitoxin component of a type II toxin-antitoxin (TA) system. Neutralizes the activity of cognate toxin Rv3189 by blocking access to the toxin active site. The chain is Probable mycobacterial cidal antitoxin Rv3188 from Mycobacterium tuberculosis (strain ATCC 25618 / H37Rv).